The following is a 263-amino-acid chain: Killer cell lectin-like receptor 4 (263 aa).

The Cytoplasmic segment spans residues 1-44 (MTEQEDTFSAVRFHKSSGLQNEMRLKETRKPEKARLRVCSVPWQ). A helical; Signal-anchor for type II membrane protein membrane pass occupies residues 45–65 (LIVIALGILISLRLVTVAVLM). Residues 66-263 (TNIFQYGQQK…CGKRLDKFPH (198 aa)) lie on the Extracellular side of the membrane. 2 N-linked (GlcNAc...) asparagine glycosylation sites follow: N87 and N104. One can recognise a C-type lectin domain in the interval 139–258 (GVKVYWFCYG…SFICICGKRL (120 aa)). Cystine bridges form between C146-C151, C164-C252, C168-C254, and C233-C246. Residues N170 and N222 are each glycosylated (N-linked (GlcNAc...) asparagine).

Homodimer; disulfide-linked. Interacts with the adapter protein TYROBP/DAP12; the interaction leads to natural killer cell activation.

Its subcellular location is the cell membrane. Functionally, receptor on natural killer (NK) cells for class I MHC. In Mus musculus (Mouse), this protein is Killer cell lectin-like receptor 4 (Klra4).